The following is a 196-amino-acid chain: FKBP-type peptidyl-prolyl cis-trans isomerase SlyD (196 aa).

The PPIase first part stretch occupies residues 1 to 69 (MKVAKDLVVS…VAVGANDAYG (69 aa)). In terms of domain architecture, PPIase FKBP-type spans 1–95 (MKVAKDLVVS…GVDELQVGMR (95 aa)). The tract at residues 76 to 120 (VQRVPKDVFMGVDELQVGMRFLAETDQGPVPVEITAVEDDHVVVD) is IF-chaperone. The interval 129 to 151 (NLKFNVEVVAIREATEEELAHGH) is PPIase second part. 6 residues coordinate Ni(2+): cysteine 167, cysteine 168, cysteine 184, cysteine 185, cysteine 193, and cysteine 195.

This sequence belongs to the FKBP-type PPIase family. In terms of assembly, monomer. Binds to a broad range of unrelated Tat signal sequences. Interacts with the hydrogenase nickel incorporation protein HypB.

It is found in the cytoplasm. The enzyme catalyses [protein]-peptidylproline (omega=180) = [protein]-peptidylproline (omega=0). Its function is as follows. Folding helper with both chaperone and peptidyl-prolyl cis-trans isomerase (PPIase) activities. Chaperone activity prevents aggregation of unfolded or partially folded proteins and promotes their correct folding. PPIases catalyze the cis-trans isomerization of Xaa-Pro bonds of peptides, which accelerates slow steps of protein folding and thus shortens the lifetime of intermediates. Both strategies lower the concentration of intermediates and increase the productivity and yield of the folding reaction. SlyD could be involved in Tat-dependent translocation, by binding to the Tat-type signal of folded proteins. In terms of biological role, also involved in hydrogenase metallocenter assembly, probably by participating in the nickel insertion step. This function in hydrogenase biosynthesis requires chaperone activity and the presence of the metal-binding domain, but not PPIase activity. This Escherichia coli O157:H7 protein is FKBP-type peptidyl-prolyl cis-trans isomerase SlyD (slyD).